The following is a 441-amino-acid chain: Enolase (441 aa).

Residue Gln164 coordinates (2R)-2-phosphoglycerate. Glu206 (proton donor) is an active-site residue. The Mg(2+) site is built by Asp243, Glu289, and Asp316. Residues Lys341, Arg370, Ser371, and Lys392 each contribute to the (2R)-2-phosphoglycerate site. The Proton acceptor role is filled by Lys341.

It belongs to the enolase family. The cofactor is Mg(2+).

The protein resides in the cytoplasm. Its subcellular location is the secreted. The protein localises to the cell surface. The enzyme catalyses (2R)-2-phosphoglycerate = phosphoenolpyruvate + H2O. Its pathway is carbohydrate degradation; glycolysis; pyruvate from D-glyceraldehyde 3-phosphate: step 4/5. Catalyzes the reversible conversion of 2-phosphoglycerate (2-PG) into phosphoenolpyruvate (PEP). It is essential for the degradation of carbohydrates via glycolysis. This is Enolase from Leuconostoc mesenteroides subsp. mesenteroides (strain ATCC 8293 / DSM 20343 / BCRC 11652 / CCM 1803 / JCM 6124 / NCDO 523 / NBRC 100496 / NCIMB 8023 / NCTC 12954 / NRRL B-1118 / 37Y).